The sequence spans 180 residues: MGIPVGKSMLVLLISLAFALCCIAAYRPSETLCGGELVDTLQFVCSDRGFYFSRPSSRANRRSRGIVEECCFRSCDLALLETYCATPAKSERDVSTSQAVLPDDFPRYPVGKFFKFDTWRQSAGRLRRGLPALLRARRGRMLAKELEAFREAKRHRPLIVLPPKDPAHGGASSEMSSNHQ.

Positions 1–24 (MGIPVGKSMLVLLISLAFALCCIA) are cleaved as a signal peptide. The tract at residues 25–52 (AYRPSETLCGGELVDTLQFVCSDRGFYF) is b. 3 disulfides stabilise this stretch: C33–C71, C45–C84, and C70–C75. A c region spans residues 53 to 64 (SRPSSRANRRSR). Residues 65-85 (GIVEECCFRSCDLALLETYCA) form an a region. The segment at 86–91 (TPAKSE) is d. A propeptide spans 92–180 (RDVSTSQAVL…ASSEMSSNHQ (89 aa)) (e peptide). The disordered stretch occupies residues 160 to 180 (VLPPKDPAHGGASSEMSSNHQ).

It belongs to the insulin family. Interacts with MYORG; this interaction is required for IGF2 secretion. Interacts with integrins ITGAV:ITGB3 and ITGA6:ITGB4; integrin-binding is required for IGF2 signaling. Interacts with IGFBP2. Post-translationally, proteolytically processed by PCSK4, proIGF2 is cleaved at Arg-128 and Arg-92 to generate big-IGF2 and mature IGF2.

The protein localises to the secreted. The insulin-like growth factors possess growth-promoting activity. Major fetal growth hormone in mammals. Plays a key role in regulating fetoplacental development. IGF2 is influenced by placental lactogen. Also involved in tissue differentiation. In adults, involved in glucose metabolism in adipose tissue, skeletal muscle and liver. Acts as a ligand for integrin which is required for IGF2 signaling. Positively regulates myogenic transcription factor MYOD1 function by facilitating the recruitment of transcriptional coactivators, thereby controlling muscle terminal differentiation. Inhibits myoblast differentiation and modulates metabolism via increasing the mitochondrial respiration rate. Its function is as follows. Preptin undergoes glucose-mediated co-secretion with insulin, and acts as a physiological amplifier of glucose-mediated insulin secretion. Exhibits osteogenic properties by increasing osteoblast mitogenic activity through phosphoactivation of MAPK1 and MAPK3. The polypeptide is Insulin-like growth factor 2 (Rattus norvegicus (Rat)).